The chain runs to 119 residues: Large ribosomal subunit protein uL18 (119 aa).

It belongs to the universal ribosomal protein uL18 family. As to quaternary structure, part of the 50S ribosomal subunit; part of the 5S rRNA/L5/L18/L25 subcomplex. Contacts the 5S and 23S rRNAs.

In terms of biological role, this is one of the proteins that bind and probably mediate the attachment of the 5S RNA into the large ribosomal subunit, where it forms part of the central protuberance. This Cereibacter sphaeroides (strain ATCC 17025 / ATH 2.4.3) (Rhodobacter sphaeroides) protein is Large ribosomal subunit protein uL18.